Here is a 162-residue protein sequence, read N- to C-terminus: MRISKPHLRSISIQCYLCLLLKSHFLTEAGIHVFILGCFSAGLPKTEANWVNVISDLKKIEDLIQSMHIDATLYTESDVHPSCKVTAMKCFLLELQVISHESGDTDIHDTVENLIILANNILSSNGNITESGCKECEELEEKNIKEFLQSFVHIVQMFINTS.

Positions Met1–Ala29 are cleaved as a signal peptide. Positions Gly30 to Ala48 are excised as a propeptide. 2 disulfides stabilise this stretch: Cys83/Cys133 and Cys90/Cys136. N-linked (GlcNAc...) asparagine glycosylation is present at Asn127.

The protein belongs to the IL-15/IL-21 family.

The protein localises to the secreted. Its function is as follows. Cytokine that plays a major role in the development of inflammatory and protective immune responses to microbial invaders and parasites by modulating immune cells of both the innate and adaptive immune systems. Stimulates the proliferation of natural killer cells, T-cells and B-cells and promotes the secretion of several cytokines. In monocytes, induces the production of IL8 and monocyte chemotactic protein 1/CCL2, two chemokines that attract neutrophils and monocytes respectively to sites of infection. Unlike most cytokines, which are secreted in soluble form, IL15 is expressed in association with its high affinity IL15RA on the surface of IL15-producing cells and delivers signals to target cells that express IL2RB and IL2RG receptor subunits. Binding to its receptor triggers the phosphorylation of JAK1 and JAK3 and the recruitment and subsequent phosphorylation of signal transducer and activator of transcription-3/STAT3 and STAT5. In mast cells, induces the rapid tyrosine phosphorylation of STAT6 and thereby controls mast cell survival and release of cytokines such as IL4. The sequence is that of Interleukin-15 (IL15) from Chlorocebus aethiops (Green monkey).